We begin with the raw amino-acid sequence, 118 residues long: MARIAGINIPDQKHTVIALTAIYGIGKTRAKAICVATGIAEDVKIRELSEEQIEKLREEVSKFTVEGDLRREVTLSIKRLLDLGCYRGLRHRRGLPVRGQRTKTNARTRKGPRKPIKK.

Positions 94 to 118 (GLPVRGQRTKTNARTRKGPRKPIKK) are disordered.

Belongs to the universal ribosomal protein uS13 family. As to quaternary structure, part of the 30S ribosomal subunit. Forms a loose heterodimer with protein S19. Forms two bridges to the 50S subunit in the 70S ribosome.

Located at the top of the head of the 30S subunit, it contacts several helices of the 16S rRNA. In the 70S ribosome it contacts the 23S rRNA (bridge B1a) and protein L5 of the 50S subunit (bridge B1b), connecting the 2 subunits; these bridges are implicated in subunit movement. Contacts the tRNAs in the A and P-sites. The polypeptide is Small ribosomal subunit protein uS13 (Haemophilus ducreyi (strain 35000HP / ATCC 700724)).